Consider the following 225-residue polypeptide: UPF0758 protein Sama_0327 (225 aa).

One can recognise an MPN domain in the interval Val102–Ile224. Zn(2+) contacts are provided by His173, His175, and Asp186. A JAMM motif motif is present at residues His173–Asp186.

This sequence belongs to the UPF0758 family.

The polypeptide is UPF0758 protein Sama_0327 (Shewanella amazonensis (strain ATCC BAA-1098 / SB2B)).